A 714-amino-acid chain; its full sequence is Kinesin-like protein KIN-13 (714 aa).

The SAM domain maps to 1-63 (MSDLVYQWLE…FRLITTLKSR (63 aa)). The span at 69-81 (QQPSAPNTGATPQ) shows a compositional bias: polar residues. Disordered stretches follow at residues 69–109 (QQPS…NDIQ) and 122–161 (GGYE…NPRG). The segment covering 82 to 92 (SVPSSHVSPHV) has biased composition (low complexity). Residues 151 to 160 (PNAPNPPNPR) show a composition bias toward pro residues. Residues 183–515 (RIRVVIRKRP…LRYADRVKEL (333 aa)) form the Kinesin motor domain. Position 273–280 (273–280 (GQTGSGKS)) interacts with ATP.

It belongs to the TRAFAC class myosin-kinesin ATPase superfamily. Kinesin family. KIN-13 subfamily. Interacts with PLK. In terms of processing, phosphorylated by PLK.

It is found in the cytoplasm. The protein resides in the cytoskeleton. It localises to the cell projection. The protein localises to the cilium. Its subcellular location is the flagellum. It is found in the flagellum basal body. The protein resides in the flagellum axoneme. It localises to the spindle. The protein localises to the chromosome. Its subcellular location is the centromere. It is found in the kinetochore. In terms of biological role, involved in cell cycle. Involved in formation of flagella, regulation of flagellar length, and formation of median bodies during interphase. Regulates flagellar length in all eight distal flagellar tips by promoting disassembly of the microtubules. Disassembles microtubules at the distal flagellar tips in a length-dependent manner in order to maintain different equilibrium lengths of the four flagellar pairs. Regulates interphase and mitotic microtubule dynamics. Regulates microtubule disassembly dynamics of the dual mitotic spindles and the median body. This chain is Kinesin-like protein KIN-13, found in Giardia intestinalis (strain ATCC 50803 / WB clone C6) (Giardia lamblia).